The following is a 565-amino-acid chain: MSEATTATTTGKPSRSTKNPDAPRPYKCPLCTKAFYRLEHQTRHIRTHTGEKPHVCTFPGCAKRFSRSDELTRHARIHTNANSRRNAAAAAAANNSARSSNSPAGNLEPSTNNAGVHMTNASMNPNVNPSYPVFIPQVGMSVAPPVATAAVSMSYPHHYSASVQQQQATFVSNGQPHNLPAQAQPATIYGIPDALHTTQNGTTIHVTGTPPGAVSQRSEPDSRLSSMNEMQLLASAAANQLDAAPRITPTKSSGVNLMPLSNAPSPPKQMNVVGSLPSSSNTSPNHLASVPNRGLTSNSSTGSFTKYTNGSSNSLYSNSSMQTPYLPSKSNSSTSLHSMYGVGTTAYAPQSLRYAHYNYLPYSRPSVSNGFDDDSSSSDFAHFRYQRRSRPVSPCSTAPSSPTFSTRSFSPTPDVTPLVTPAHSPRLRPMDDPSCVQLPSIRSLSLRPSQVPLIPPLKCDPNAFSASTPASGAVSRTPSSVSLSSLSNVNSSMPHKPASQSNVGPVRISSNRRSRKFSSSSRVSVSNLLAGSPPSPSSSTKSASSSYSTTTPAFSIGPLTPMTKP.

Polar residues predominate over residues 1 to 19; sequence MSEATTATTTGKPSRSTKN. The disordered stretch occupies residues 1–25; sequence MSEATTATTTGKPSRSTKNPDAPRP. C2H2-type zinc fingers lie at residues 26 to 48 and 54 to 78; these read YKCP…IRTH and HVCT…ARIH. Disordered stretches follow at residues 79–119, 261–303, 390–434, and 466–565; these read TNAN…VHMT, SNAP…STGS, RPVS…DDPS, and ASTP…MTKP. Residues 80–102 are compositionally biased toward low complexity; it reads NANSRRNAAAAAAANNSARSSNS. 3 stretches are compositionally biased toward polar residues: residues 108–119, 276–286, and 294–303; these read EPSTNNAGVHMT, LPSSSNTSPNH, and GLTSNSSTGS. Positions 391–413 are enriched in low complexity; the sequence is PVSPCSTAPSSPTFSTRSFSPTP. The segment covering 466 to 478 has biased composition (polar residues); sequence ASTPASGAVSRTP. Composition is skewed to low complexity over residues 479–492, 517–526, and 537–555; these read SSVS…VNSS, FSSSSRVSVS, and SSST…PAFS.

It belongs to the creA/MIG C2H2-type zinc-finger protein family.

The protein localises to the nucleus. Functionally, involved in carbon catabolite repression. Represses the transcription of various genes including the inv1 gene. The chain is DNA-binding protein scr1 (scr1) from Schizosaccharomyces pombe (strain 972 / ATCC 24843) (Fission yeast).